The following is a 1430-amino-acid chain: ABC transporter eupT (1430 aa).

A disordered region spans residues 1-26 (MAPAIDSTVNDLQPNTPNPEKALSSQ). One can recognise an ABC transporter 1 domain in the interval 112-368 (LALPAMIRQL…FVNLGFECPA (257 aa)). Asn292 is a glycosylation site (N-linked (GlcNAc...) asparagine). 5 helical membrane passes run 476 to 496 (WPAVWVMVGNTIMALIMSSLF), 511 to 531 (VVLFMAILFNAFSSILEVMTL), 557 to 577 (VLVDMPMKITSTISFNLVFYF), 586 to 606 (GNFFFYLLVVFLIVLAMSGVF), and 620 to 640 (MVPASVLMLALLIFTGFVVPV). N-linked (GlcNAc...) asparagine glycosylation is present at Asn684. Residues 707 to 727 (VGIIIAMVIFNYLMYFIASEY) traverse the membrane as a helical segment. Residues 789–1032 (FHWNNVCYDL…TLIDYFERNG (244 aa)) enclose the ABC transporter 2 domain. Residue 825–832 (GVSGAGKT) coordinates ATP. Asn1019 carries N-linked (GlcNAc...) asparagine glycosylation. A run of 6 helical transmembrane segments spans residues 1133-1153 (ITLCIATSLFIGLVFFNAPLS), 1213-1233 (LPWSTLASVFMWALFYYPIGF), 1249-1269 (LMWLLFWQFLVWVSTFTHMCI), 1278-1298 (GGNIANFLFVLAFFFCGVLAS), 1305-1325 (FWIFLYRASPLSYWVSAVLST), and 1400-1420 (FGILWVYIGFNIAAALALYWI).

It belongs to the ABC transporter superfamily. ABCG family. PDR (TC 3.A.1.205) subfamily.

It is found in the cell membrane. Functionally, ABC transporter; part of the gene cluster that mediates the biosynthesis of eupenifeldin, a bistropolone meroterpenoid that acts as an antitumor agent. The polypeptide is ABC transporter eupT (Phoma sp).